The chain runs to 690 residues: MAKKKSEEHSGADANDSDYQEEPNFEDPPGFVDNISDEDLLGDMLAQRPSEADGVESVVVVDNIPKVEPVRLEKLKSVINKLFSNYGDIVNVVYPVDEEGKTKGYAFMEYKQASQAEEAVKKLNNHRLDKNHTFAVNLFTDFQKYENIPEKWEPPTVQTFKVQSDLYNFINDPDTYDQYCVAAETAPNCVQVGFWQNVLPEPFELETRERFTDTFVKWSPLGTYVVTFHKPGVAIWGGSSFQKIQKFPHPGTQFVEFSPCENYLVTYGPTPTGQKIIIWDIRTGAEKRSFVADGMSVLSMFRWSHDDKFVARMGENSIHIYETPSFYLLDLKSIKIPGIRGFSWSPTDNVIAYWVEEQNQIPARVTLMEIPKKREIRNKNLFHVADCKLHWQKSGDYLCVKVDRYSKLKKDKKDLDVKFLGMFYNFEIFHMREKEIPVDSVEIRELILAFAWEPIGNKFSIIHGETNSSNVSFYEVNKGVKPSLVKRLEKKSCTHLFWSPRGQFIVMANLTMGTFEFVDSTNDYIITSSPDHFRASEVEWDPTGRYVVTGVSSWKVKEDTGFNMYTFQGRIIKRTILKNFVQFLWRPRPPTLLSEEKQKEIKKNLKKYYAAFEQKDRLRLTRASKELLEKRSQLRETFMEYRNKRIAEWADQKSRRIMLRGHVDTDNLETDEVDEEIVEFLVKEEVTLLE.

The segment covering 1 to 11 (MAKKKSEEHSG) has biased composition (basic and acidic residues). The interval 1–36 (MAKKKSEEHSGADANDSDYQEEPNFEDPPGFVDNIS) is disordered. A compositionally biased stretch (acidic residues) spans 15–25 (NDSDYQEEPNF). In terms of domain architecture, RRM spans 57-141 (SVVVVDNIPK…HTFAVNLFTD (85 aa)). 5 WD repeats span residues 207 to 246 (TRERFTDTFVKWSPLGTYVVTFHKPGVAIWGGSSFQKIQK), 293 to 331 (DGMSVLSMFRWSHDDKFVARMGENSIHIYETPSFYLLDL), 334 to 369 (IKIPGIRGFSWSPTDNVIAYWVEEQNQIPARVTLME), 442 to 484 (EIRE…KPSL), and 530 to 575 (PDHF…IKRT). Positions 595–645 (EEKQKEIKKNLKKYYAAFEQKDRLRLTRASKELLEKRSQLRETFMEYRNKR) form a coiled coil.

It belongs to the eIF-3 subunit B family. Component of the eukaryotic translation initiation factor 3 (eIF-3) complex. The eIF-3 complex interacts with pix. Interacts with mxt.

The protein localises to the cytoplasm. RNA-binding component of the eukaryotic translation initiation factor 3 (eIF-3) complex, which is involved in protein synthesis of a specialized repertoire of mRNAs and, together with other initiation factors, stimulates binding of mRNA and methionyl-tRNAi to the 40S ribosome. The eIF-3 complex specifically targets and initiates translation of a subset of mRNAs involved in cell proliferation. In Drosophila simulans (Fruit fly), this protein is Eukaryotic translation initiation factor 3 subunit B.